Here is a 255-residue protein sequence, read N- to C-terminus: Malonyl-[acyl-carrier protein] O-methyltransferase (255 aa).

It belongs to the methyltransferase superfamily.

The catalysed reaction is malonyl-[ACP] + S-adenosyl-L-methionine = malonyl-[ACP] methyl ester + S-adenosyl-L-homocysteine. The protein operates within cofactor biosynthesis; biotin biosynthesis. Its function is as follows. Converts the free carboxyl group of a malonyl-thioester to its methyl ester by transfer of a methyl group from S-adenosyl-L-methionine (SAM). It allows to synthesize pimeloyl-ACP via the fatty acid synthetic pathway. This is Malonyl-[acyl-carrier protein] O-methyltransferase from Acinetobacter baylyi (strain ATCC 33305 / BD413 / ADP1).